A 256-amino-acid polypeptide reads, in one-letter code: Imidazole glycerol phosphate synthase subunit HisF (256 aa).

Residues Asp-13 and Asp-132 contribute to the active site.

The protein belongs to the HisA/HisF family. As to quaternary structure, heterodimer of HisH and HisF.

Its subcellular location is the cytoplasm. It carries out the reaction 5-[(5-phospho-1-deoxy-D-ribulos-1-ylimino)methylamino]-1-(5-phospho-beta-D-ribosyl)imidazole-4-carboxamide + L-glutamine = D-erythro-1-(imidazol-4-yl)glycerol 3-phosphate + 5-amino-1-(5-phospho-beta-D-ribosyl)imidazole-4-carboxamide + L-glutamate + H(+). It participates in amino-acid biosynthesis; L-histidine biosynthesis; L-histidine from 5-phospho-alpha-D-ribose 1-diphosphate: step 5/9. Functionally, IGPS catalyzes the conversion of PRFAR and glutamine to IGP, AICAR and glutamate. The HisF subunit catalyzes the cyclization activity that produces IGP and AICAR from PRFAR using the ammonia provided by the HisH subunit. The chain is Imidazole glycerol phosphate synthase subunit HisF from Leptospira interrogans serogroup Icterohaemorrhagiae serovar copenhageni (strain Fiocruz L1-130).